A 189-amino-acid polypeptide reads, in one-letter code: Elongation factor P (189 aa).

It belongs to the elongation factor P family.

It localises to the cytoplasm. It functions in the pathway protein biosynthesis; polypeptide chain elongation. Functionally, involved in peptide bond synthesis. Stimulates efficient translation and peptide-bond synthesis on native or reconstituted 70S ribosomes in vitro. Probably functions indirectly by altering the affinity of the ribosome for aminoacyl-tRNA, thus increasing their reactivity as acceptors for peptidyl transferase. In Pseudomonas syringae pv. tomato (strain ATCC BAA-871 / DC3000), this protein is Elongation factor P.